The sequence spans 893 residues: DNA gyrase subunit A (893 aa).

One can recognise a Topo IIA-type catalytic domain in the interval 35 to 501 (LPDVRDGLKP…GLEDLEDEDL (467 aa)). Residue tyrosine 123 is the O-(5'-phospho-DNA)-tyrosine intermediate of the active site. A GyrA-box motif is present at residues 528 to 534 (QNRGGRG). A disordered region spans residues 810 to 893 (VNEEDDNEEN…ASDNEEDSDE (84 aa)). Composition is skewed to acidic residues over residues 812–821 (EEDDNEENAD) and 852–862 (DAEMESVESPE). The span at 863–879 (NDDRIDIRQDFMDRVNE) shows a compositional bias: basic and acidic residues. The segment covering 880-893 (DIESASDNEEDSDE) has biased composition (acidic residues).

This sequence belongs to the type II topoisomerase GyrA/ParC subunit family. As to quaternary structure, heterotetramer, composed of two GyrA and two GyrB chains. In the heterotetramer, GyrA contains the active site tyrosine that forms a transient covalent intermediate with DNA, while GyrB binds cofactors and catalyzes ATP hydrolysis.

The protein resides in the cytoplasm. The catalysed reaction is ATP-dependent breakage, passage and rejoining of double-stranded DNA.. A type II topoisomerase that negatively supercoils closed circular double-stranded (ds) DNA in an ATP-dependent manner to modulate DNA topology and maintain chromosomes in an underwound state. Negative supercoiling favors strand separation, and DNA replication, transcription, recombination and repair, all of which involve strand separation. Also able to catalyze the interconversion of other topological isomers of dsDNA rings, including catenanes and knotted rings. Type II topoisomerases break and join 2 DNA strands simultaneously in an ATP-dependent manner. In Staphylococcus epidermidis (strain ATCC 35984 / DSM 28319 / BCRC 17069 / CCUG 31568 / BM 3577 / RP62A), this protein is DNA gyrase subunit A.